An 808-amino-acid chain; its full sequence is Probable potassium transporter 3 (808 aa).

Topologically, residues 1-34 are cytoplasmic; sequence MPVADCESGLSPADVTGAGAANGNPGHWRSYYRH. A helical transmembrane segment spans residues 35–55; that stretch reads VLLLAYQSCGVVYGDLSTSPL. Residues 56–81 are Extracellular-facing; the sequence is YVYKSTFIIGSLRRFQDEEIVFGVFS. Residues 82 to 102 traverse the membrane as a helical segment; that stretch reads LVFWTLTLIPLLKYVFIVLAA. The Cytoplasmic segment spans residues 103 to 167; that stretch reads DDNGEGGTFA…FLENHRKSRT (65 aa). The chain crosses the membrane as a helical span at residues 168–188; it reads FLLVTVLFGASLVIGDGVLTP. The Extracellular portion of the chain corresponds to 189 to 204; it reads PMSVLSSFSGLQVHST. A helical transmembrane segment spans residues 205-225; that stretch reads ALTSGEVEILSCTVLVCLFMV. Residues 226 to 232 lie on the Cytoplasmic side of the membrane; that stretch reads QHWGTHR. A helical transmembrane segment spans residues 233–253; it reads VAFLFAPVVIVWLLLLGALGV. The Extracellular segment spans residues 254-283; that stretch reads YNIVVWNPRVLRALSPYYLVRFFQHTGKDG. The helical transmembrane segment at 284-304 threads the bilayer; it reads WISLGGILLSMTGTEAMYADL. The Cytoplasmic segment spans residues 305 to 313; it reads GHFTAASIR. The helical transmembrane segment at 314–334 threads the bilayer; the sequence is VAFVGLIYPCLVLQYMGQAAF. Residues 335-354 are Extracellular-facing; that stretch reads LSKSPHCDIHFVFFESIPTG. The helical transmembrane segment at 355-375 threads the bilayer; that stretch reads IFWPVLVIATLAAIVGSQAVI. Residues 376 to 406 lie on the Cytoplasmic side of the membrane; sequence SATFSIVRQCTALGCFPRVKIVHTSRRIHGQ. Residues 407–427 traverse the membrane as a helical segment; that stretch reads IYSPEINWILMLLCIAVTMGL. At 428 to 439 the chain is on the extracellular side; that stretch reads RDTTLIGNAYGM. A helical membrane pass occupies residues 440 to 460; the sequence is ACAGVMLVTTLLMALVIVFVW. The Cytoplasmic segment spans residues 461-464; that stretch reads QYSC. A helical membrane pass occupies residues 465-485; it reads LVAALFLVAFGVVEAVYLSAA. Topologically, residues 486–491 are extracellular; sequence LMKVPQ. Residues 492-512 traverse the membrane as a helical segment; the sequence is GGWLPLVLSLVFVAVMYVWHY. Residues 513–808 are Cytoplasmic-facing; sequence GTRRKHQFDV…LIEVGMIYYV (296 aa).

The protein belongs to the HAK/KUP transporter (TC 2.A.72.3) family.

The protein resides in the membrane. Functionally, high-affinity potassium transporter. The protein is Probable potassium transporter 3 (HAK3) of Oryza sativa subsp. japonica (Rice).